We begin with the raw amino-acid sequence, 234 residues long: MRRADGQPVTVLVVDDEPVLAEMVSMALRYEGWNITTAGDGSSAIAAARRQRPDVVVLDVMLPDMSGLDVLHKLRSENPGLPVLLLTAKDAVEDRIAGLTAGGDDYVTKPFSIEEVVLRLRALLRRTGVTTVDSGAQLVVGDLVLDEDSHEVMRAGEPVSLTSTEFELLRFMMHNSKRVLSKAQILDRVWSYDFGGRSNIVELYISYLRKKIDNGREPMIHTLRGAGYVLKPAR.

In terms of domain architecture, Response regulatory spans 10–124 (TVLVVDDEPV…EVVLRLRALL (115 aa)). Asp-59 is modified (4-aspartylphosphate). Positions 135–232 (GAQLVVGDLV…LRGAGYVLKP (98 aa)) form a DNA-binding region, ompR/PhoB-type.

Phosphorylated by TcrY.

It localises to the cytoplasm. Functionally, member of the two-component regulatory system TcrY/TcrX. In Mycobacterium tuberculosis (strain ATCC 25618 / H37Rv), this protein is Probable transcriptional regulatory protein TcrX (tcrX).